Consider the following 243-residue polypeptide: MIINYKFSDFYFDKKLSGKEVEFSIQIQKREASSDKNLQSKNLIIDAINVQRDFSEKNKSSDNLEILNKQIEDKNDLIINLEKKVFDLTLENKKNIDDFNEKAKSFAKKAQEELDKYKLELKSFLENEFEEKKKFSFQKLFENIINPLNNFRLAIDAGSKQENSSIKSYVQGFEMLLNQTINILESYGLIIIRPEIGDTFNPEVHNAVELREEGTPNRILKINSLGYQFHERVLKPASVIVSK.

It belongs to the GrpE family. In terms of assembly, homodimer.

The protein localises to the cytoplasm. Functionally, participates actively in the response to hyperosmotic and heat shock by preventing the aggregation of stress-denatured proteins, in association with DnaK and GrpE. It is the nucleotide exchange factor for DnaK and may function as a thermosensor. Unfolded proteins bind initially to DnaJ; upon interaction with the DnaJ-bound protein, DnaK hydrolyzes its bound ATP, resulting in the formation of a stable complex. GrpE releases ADP from DnaK; ATP binding to DnaK triggers the release of the substrate protein, thus completing the reaction cycle. Several rounds of ATP-dependent interactions between DnaJ, DnaK and GrpE are required for fully efficient folding. The protein is Protein GrpE of Mycoplasma mobile (strain ATCC 43663 / 163K / NCTC 11711) (Mesomycoplasma mobile).